Here is a 122-residue protein sequence, read N- to C-terminus: MIQAQTILQVADNTGAKEIMCIRVLRGSSKKGARVGDIIVAVVKKTKKQTSVKKSEIVRAVIVRTRTTIHRANGMHLKFNENAAVLVTKELHPKGTRLFGPIPYECSEAGLNSIISLAPYII.

This sequence belongs to the universal ribosomal protein uL14 family. As to quaternary structure, part of the 50S ribosomal subunit.

The protein localises to the plastid. Functionally, binds to 23S rRNA. This is Large ribosomal subunit protein uL14c (rpl14) from Helicosporidium sp. subsp. Simulium jonesii (Green alga).